A 150-amino-acid chain; its full sequence is Small heat shock protein HspE (150 aa).

Residues 27-137 (VDNGDTYPPY…KPRQIAIDVA (111 aa)) enclose the sHSP domain.

It belongs to the small heat shock protein (HSP20) family.

This Bradyrhizobium diazoefficiens (strain JCM 10833 / BCRC 13528 / IAM 13628 / NBRC 14792 / USDA 110) protein is Small heat shock protein HspE (hspE).